The primary structure comprises 218 residues: Ras-related protein Rab-11B (218 aa).

Gly2 carries the post-translational modification N-acetylglycine. Positions 20, 21, 23, 24, 25, 26, 37, 38, 40, 42, and 43 each coordinate GTP. Mg(2+) is bound at residue Ser25. A Switch 1 motif is present at residues 36 to 47; sequence FNLESKSTIGVE. Mg(2+) contacts are provided by Thr43 and Asp66. A Switch 2 motif is present at residues 67–86; it reads TAGQERYRAITSAYYRGAVG. Gly69, Asn124, Lys125, Asp127, Ala155, and Leu156 together coordinate GTP. The disordered stretch occupies residues 183–218; the sequence is DRSAHDESPGNNVVDISVPPTTDGQKSNKLQCCQNM. Over residues 201-218 the composition is skewed to polar residues; sequence PPTTDGQKSNKLQCCQNM. Residues Cys214 and Cys215 are each lipidated (S-geranylgeranyl cysteine). Cys215 is modified (cysteine methyl ester). Residues 216–218 constitute a propeptide, removed in mature form; that stretch reads QNM.

Belongs to the small GTPase superfamily. Rab family. It depends on Mg(2+) as a cofactor.

Its subcellular location is the recycling endosome membrane. The protein resides in the cytoplasmic vesicle. It localises to the secretory vesicle. It is found in the synaptic vesicle membrane. The protein localises to the phagosome membrane. It catalyses the reaction GTP + H2O = GDP + phosphate + H(+). Its activity is regulated as follows. Regulated by guanine nucleotide exchange factors (GEFs) which promote the exchange of bound GDP for free GTP. Regulated by GTPase activating proteins (GAPs) which increase the GTP hydrolysis activity. Inhibited by GDP dissociation inhibitors (GDIs) which prevent Rab-GDP dissociation. Functionally, the small GTPases Rab are key regulators of intracellular membrane trafficking, from the formation of transport vesicles to their fusion with membranes. Rabs cycle between an inactive GDP-bound form and an active GTP-bound form that is able to recruit to membranes different set of downstream effectors directly responsible for vesicle formation, movement, tethering and fusion. That Rab plays a role in endocytic recycling, regulating apical recycling of several transmembrane proteins including cystic fibrosis transmembrane conductance regulator/CFTR, epithelial sodium channel/ENaC, potassium voltage-gated channel, and voltage-dependent L-type calcium channel. May also regulate constitutive and regulated secretion, like insulin granule exocytosis. Required for melanosome transport and release from melanocytes. Also regulates V-ATPase intracellular transport in response to extracellular acidosis. The chain is Ras-related protein Rab-11B from Diplobatis ommata (Ocellated electric ray).